The primary structure comprises 182 residues: Large ribosomal subunit protein bL25 (182 aa).

Belongs to the bacterial ribosomal protein bL25 family. CTC subfamily. As to quaternary structure, part of the 50S ribosomal subunit; part of the 5S rRNA/L5/L18/L25 subcomplex. Contacts the 5S rRNA. Binds to the 5S rRNA independently of L5 and L18.

In terms of biological role, this is one of the proteins that binds to the 5S RNA in the ribosome where it forms part of the central protuberance. This Borrelia hermsii (strain HS1 / DAH) protein is Large ribosomal subunit protein bL25.